The primary structure comprises 374 residues: Alcohol dehydrogenase 3, mitochondrial (374 aa).

Residues 1-26 (MLRLTSARSIVSPLRKGAFGSIRTLA) constitute a mitochondrion transit peptide. Zn(2+)-binding residues include cysteine 70, histidine 93, cysteine 124, cysteine 127, cysteine 130, cysteine 138, and cysteine 180. NAD(+) is bound by residues 204 to 210 (GAAGGLG), aspartate 228, lysine 233, 295 to 297 (VGL), and arginine 367.

This sequence belongs to the zinc-containing alcohol dehydrogenase family. Homotetramer. Zn(2+) serves as cofactor.

It localises to the mitochondrion matrix. It carries out the reaction a primary alcohol + NAD(+) = an aldehyde + NADH + H(+). It catalyses the reaction a secondary alcohol + NAD(+) = a ketone + NADH + H(+). The chain is Alcohol dehydrogenase 3, mitochondrial (ADH3) from Kluyveromyces lactis (strain ATCC 8585 / CBS 2359 / DSM 70799 / NBRC 1267 / NRRL Y-1140 / WM37) (Yeast).